The following is a 226-amino-acid chain: Uridylate kinase (226 aa).

9-13 (KVSGK) serves as a coordination point for ATP. Gly-46 is a binding site for UMP. Residues Gly-47 and Arg-51 each coordinate ATP. UMP-binding positions include Asp-68 and 116-122 (FQPGQST). Positions 142, 148, and 151 each coordinate ATP.

It belongs to the UMP kinase family. In terms of assembly, homohexamer.

It is found in the cytoplasm. It catalyses the reaction UMP + ATP = UDP + ADP. The protein operates within pyrimidine metabolism; CTP biosynthesis via de novo pathway; UDP from UMP (UMPK route): step 1/1. Inhibited by UTP. In terms of biological role, catalyzes the reversible phosphorylation of UMP to UDP. The protein is Uridylate kinase of Hyperthermus butylicus (strain DSM 5456 / JCM 9403 / PLM1-5).